We begin with the raw amino-acid sequence, 246 residues long: Phosphate import ATP-binding protein PstB (246 aa).

The 239-residue stretch at 3–241 (AKTTNLNLFY…PKQEKTKAYL (239 aa)) folds into the ABC transporter domain. An ATP-binding site is contributed by 35-42 (GASGCGKS).

This sequence belongs to the ABC transporter superfamily. Phosphate importer (TC 3.A.1.7) family. In terms of assembly, the complex is composed of two ATP-binding proteins (PstB), two transmembrane proteins (PstC and PstA) and a solute-binding protein (PstS).

The protein localises to the cell inner membrane. The catalysed reaction is phosphate(out) + ATP + H2O = ADP + 2 phosphate(in) + H(+). Functionally, part of the ABC transporter complex PstSACB involved in phosphate import. Responsible for energy coupling to the transport system. The sequence is that of Phosphate import ATP-binding protein PstB from Campylobacter jejuni subsp. jejuni serotype O:2 (strain ATCC 700819 / NCTC 11168).